Here is a 304-residue protein sequence, read N- to C-terminus: Acetylglutamate kinase (304 aa).

Substrate-binding positions include glycine 82 to glycine 83, arginine 104, and asparagine 197.

It belongs to the acetylglutamate kinase family. ArgB subfamily.

It is found in the cytoplasm. It carries out the reaction N-acetyl-L-glutamate + ATP = N-acetyl-L-glutamyl 5-phosphate + ADP. It participates in amino-acid biosynthesis; L-arginine biosynthesis; N(2)-acetyl-L-ornithine from L-glutamate: step 2/4. Functionally, catalyzes the ATP-dependent phosphorylation of N-acetyl-L-glutamate. The protein is Acetylglutamate kinase of Prochlorococcus marinus (strain SARG / CCMP1375 / SS120).